The following is a 278-amino-acid chain: Envelope glycoprotein L (278 aa).

The N-terminal stretch at methionine 1–alanine 32 is a signal peptide. In terms of domain architecture, gL betaherpesvirus-type spans valine 43 to glutamate 256. Residues cysteine 154 and cysteine 159 are joined by a disulfide bond.

This sequence belongs to the herpesviridae glycoprotein L (gL) family. Betaherpesvirinae gL subfamily. In terms of assembly, interacts with glycoprotein H (gH); this interaction is necessary for the correct processing and cell surface expression of gH. Forms the envelope pentamer complex (PC) composed of gH, gL, UL128, UL130, and UL131A. The pentamer interacts with host NRP2. Forms the envelope trimer complex composed of gH, gL, and gO. The trimer interacts with host PDGFRA. The trimer also interacts with host EPHA2.

It localises to the virion membrane. Its subcellular location is the host cell membrane. It is found in the host Golgi apparatus. The protein resides in the host trans-Golgi network. The heterodimer glycoprotein H-glycoprotein L is required for the fusion of viral and plasma membranes leading to virus entry into the host cell. Acts as a functional inhibitor of gH and maintains gH in an inhibited form. Upon binding to host integrins, gL dissociates from gH leading to activation of the viral fusion glycoproteins gB and gH. In human cytomegalovirus, forms two distincts complexes to mediate viral entry, a trimer and a pentamer at the surface of the virion envelope. The gH-gL-gO trimer is required for infection in fibroblasts by interacting with host PDGFRA, and in glioblastoma cells by interacting with host EPHA2. The gH-gL-UL128-UL130-UL131A pentamer is essential for viral entry in epithelial, endothelial and myeloid cells via interaction with host NRP2. This chain is Envelope glycoprotein L, found in Human cytomegalovirus (strain 119) (HHV-5).